The primary structure comprises 279 residues: Urease accessory protein UreD (279 aa).

The protein belongs to the UreD family. In terms of assembly, ureD, UreF and UreG form a complex that acts as a GTP-hydrolysis-dependent molecular chaperone, activating the urease apoprotein by helping to assemble the nickel containing metallocenter of UreC. The UreE protein probably delivers the nickel.

The protein resides in the cytoplasm. Required for maturation of urease via the functional incorporation of the urease nickel metallocenter. This chain is Urease accessory protein UreD, found in Pseudomonas fluorescens (strain Pf0-1).